We begin with the raw amino-acid sequence, 842 residues long: Circularly permutated Ras protein 1 (842 aa).

Residues 62–66 (DTAGQ), 121–124 (NKVD), and 181–188 (GGGGVGKS) contribute to the GTP site. Positions 253 to 274 (SGKDKQPSPQQAASPSTIDRTG) are disordered. Residues 259–274 (PSPQQAASPSTIDRTG) show a composition bias toward polar residues. Residues 377 to 627 (IIIYCIDVSG…TQNPMIATDV (251 aa)) enclose the VWFA domain.

This sequence belongs to the small GTPase superfamily. CpRas family.

The sequence is that of Circularly permutated Ras protein 1 (cpras1) from Dictyostelium discoideum (Social amoeba).